We begin with the raw amino-acid sequence, 645 residues long: Protein LHY (645 aa).

At serine 6 the chain carries Phosphoserine. Residues 19-73 form the HTH myb-type domain; sequence TITKQRERWTEDEHERFLEALRLYGRAWQRIEEHIGTKTAVQIRSHAQKFFTKLE. Residues 46–69 constitute a DNA-binding region (H-T-H motif); sequence WQRIEEHIGTKTAVQIRSHAQKFF. Disordered stretches follow at residues 89-127, 149-212, 410-437, and 458-500; these read IEIP…AKLV, EKTS…GTTV, QNLA…ADSK, and AQKK…TDEN. Polar residues predominate over residues 110–120; sequence NNGTSSSQVSS. Residues 149-158 are compositionally biased toward basic and acidic residues; sequence EKTSTGKENQ. Over residues 159–169 the composition is skewed to polar residues; it reads DENCSGVSTVN. Positions 197–207 are enriched in basic and acidic residues; the sequence is VPKKNKDKDGN. Over residues 468-478 the composition is skewed to polar residues; that stretch reads SCGSNTPSGSD. Positions 483–498 are enriched in basic and acidic residues; the sequence is ALDKMEKDKEDVKETD.

In terms of assembly, homodimer or heterodimer with CCA1. Interacts with CCA1 (via internal domain); independently of photoperiod. Functions probably as part of a large complex. Interacts with CKB1 and CKB3. Interacts with LNK1 and LNK2. Phosphorylated by CK2. In terms of tissue distribution, expressed in leaves, roots, stems, flowers and siliques.

Its subcellular location is the nucleus. Functionally, transcription factor involved in the circadian clock. Binds to the promoter region of APRR1/TOC1 and TCP21/CHE to repress their transcription. Represses both CCA1 and itself. May recognize the promoter of JMJ14 to regulates its expression during the night in a circadian manner. This chain is Protein LHY, found in Arabidopsis thaliana (Mouse-ear cress).